The chain runs to 829 residues: Translation initiation factor IF-2 (829 aa).

Residues 128 to 137 show a composition bias toward basic and acidic residues; that stretch reads QNAEEEKVEA. The disordered stretch occupies residues 128–157; that stretch reads QNAEEEKVEASAKTVQNNEDIQPQTSKKKE. A compositionally biased stretch (polar residues) spans 140–152; it reads KTVQNNEDIQPQT. The tr-type G domain occupies 327 to 497; that stretch reads TRAPVVTVMG…LLIAEMQDLK (171 aa). The tract at residues 336 to 343 is G1; the sequence is GHVDHGKT. 336–343 contributes to the GTP binding site; sequence GHVDHGKT. The interval 361–365 is G2; the sequence is GITQH. Residues 383-386 are G3; sequence DTPG. GTP contacts are provided by residues 383-387 and 437-440; these read DTPGH and NKID. Residues 437–440 are G4; that stretch reads NKID. The interval 473-475 is G5; the sequence is SAL.

This sequence belongs to the TRAFAC class translation factor GTPase superfamily. Classic translation factor GTPase family. IF-2 subfamily.

Its subcellular location is the cytoplasm. Functionally, one of the essential components for the initiation of protein synthesis. Protects formylmethionyl-tRNA from spontaneous hydrolysis and promotes its binding to the 30S ribosomal subunits. Also involved in the hydrolysis of GTP during the formation of the 70S ribosomal complex. This Rickettsia felis (strain ATCC VR-1525 / URRWXCal2) (Rickettsia azadi) protein is Translation initiation factor IF-2.